The chain runs to 237 residues: Ribosomal RNA small subunit methyltransferase G (237 aa).

S-adenosyl-L-methionine is bound by residues Gly72, Leu77, 123-124 (AE), and Arg138. The tract at residues 210-237 (TALETGTKAAPSRSPRKPGGRKKRGRKR) is disordered. A compositionally biased stretch (basic residues) spans 223–237 (SPRKPGGRKKRGRKR).

It belongs to the methyltransferase superfamily. RNA methyltransferase RsmG family.

The protein resides in the cytoplasm. Its function is as follows. Specifically methylates the N7 position of guanine in position 518 of 16S rRNA. The protein is Ribosomal RNA small subunit methyltransferase G of Thermobifida fusca (strain YX).